The sequence spans 453 residues: Adenylyltransferase and sulfurtransferase MOCS3 (453 aa).

At Thr-62 the chain carries Phosphothreonine. ATP-binding positions include Gly-101, Asp-122, 129 to 133 (SNFHR), Lys-146, and 190 to 191 (DN). Zn(2+)-binding residues include Cys-231 and Cys-234. The Glycyl thioester intermediate; for adenylyltransferase activity role is filled by Cys-248. The Zn(2+) site is built by Cys-306 and Cys-309. In terms of domain architecture, Rhodanese spans 355–451 (QAKPHLLIDV…WTSNIDPNFP (97 aa)). The active-site Cysteine persulfide intermediate; for sulfurtransferase activity is Cys-410.

This sequence in the N-terminal section; belongs to the HesA/MoeB/ThiF family. UBA4 subfamily. Zn(2+) is required as a cofactor.

The protein resides in the cytoplasm. Its subcellular location is the cytosol. The catalysed reaction is [molybdopterin-synthase sulfur-carrier protein]-C-terminal Gly-Gly + ATP + H(+) = [molybdopterin-synthase sulfur-carrier protein]-C-terminal Gly-Gly-AMP + diphosphate. It catalyses the reaction [molybdopterin-synthase sulfur-carrier protein]-C-terminal Gly-Gly-AMP + S-sulfanyl-L-cysteinyl-[cysteine desulfurase] + AH2 = [molybdopterin-synthase sulfur-carrier protein]-C-terminal-Gly-aminoethanethioate + L-cysteinyl-[cysteine desulfurase] + A + AMP + 2 H(+). The protein operates within tRNA modification; 5-methoxycarbonylmethyl-2-thiouridine-tRNA biosynthesis. It participates in cofactor biosynthesis; molybdopterin biosynthesis. In terms of biological role, plays a central role in 2-thiolation of mcm(5)S(2)U at tRNA wobble positions of cytosolic tRNA(Lys), tRNA(Glu) and tRNA(Gln). Also essential during biosynthesis of the molybdenum cofactor. Acts by mediating the C-terminal thiocarboxylation of sulfur carriers URM1 and MOCS2A. Its N-terminus first activates URM1 and MOCS2A as acyl-adenylates (-COAMP), then the persulfide sulfur on the catalytic cysteine is transferred to URM1 and MOCS2A to form thiocarboxylation (-COSH) of their C-terminus. The reaction probably involves hydrogen sulfide that is generated from the persulfide intermediate and that acts as a nucleophile towards URM1 and MOCS2A. Subsequently, a transient disulfide bond is formed. Does not use thiosulfate as sulfur donor; NFS1 probably acting as a sulfur donor for thiocarboxylation reactions. This is Adenylyltransferase and sulfurtransferase MOCS3 from Drosophila sechellia (Fruit fly).